The following is a 160-amino-acid chain: MRLLILAVGKLKQGPERELAERYRARFDDLGRKLGFRGLDVHEIAESRAREAPARMAEEAAAIIAQVQDGAVLVTLDERGQSLGSTAFAAQLGRWRDEQVPGTIFVIGGADGLLPELRRKAKLSMSFGGATWPHQMVRVMLLEQIYRAATILAGHPYHRA.

L76 and G108 together coordinate S-adenosyl-L-methionine.

This sequence belongs to the RNA methyltransferase RlmH family. Homodimer.

It localises to the cytoplasm. It catalyses the reaction pseudouridine(1915) in 23S rRNA + S-adenosyl-L-methionine = N(3)-methylpseudouridine(1915) in 23S rRNA + S-adenosyl-L-homocysteine + H(+). Its function is as follows. Specifically methylates the pseudouridine at position 1915 (m3Psi1915) in 23S rRNA. This chain is Ribosomal RNA large subunit methyltransferase H, found in Rhodopseudomonas palustris (strain TIE-1).